The sequence spans 395 residues: Phosphopentomutase (395 aa).

The Mn(2+) site is built by aspartate 14, aspartate 286, histidine 291, aspartate 327, histidine 328, and histidine 339.

Belongs to the phosphopentomutase family. The cofactor is Mn(2+).

The protein localises to the cytoplasm. The enzyme catalyses 2-deoxy-alpha-D-ribose 1-phosphate = 2-deoxy-D-ribose 5-phosphate. The catalysed reaction is alpha-D-ribose 1-phosphate = D-ribose 5-phosphate. Its pathway is carbohydrate degradation; 2-deoxy-D-ribose 1-phosphate degradation; D-glyceraldehyde 3-phosphate and acetaldehyde from 2-deoxy-alpha-D-ribose 1-phosphate: step 1/2. In terms of biological role, isomerase that catalyzes the conversion of deoxy-ribose 1-phosphate (dRib-1-P) and ribose 1-phosphate (Rib-1-P) to deoxy-ribose 5-phosphate (dRib-5-P) and ribose 5-phosphate (Rib-5-P), respectively. The sequence is that of Phosphopentomutase from Staphylococcus saprophyticus subsp. saprophyticus (strain ATCC 15305 / DSM 20229 / NCIMB 8711 / NCTC 7292 / S-41).